Consider the following 391-residue polypeptide: Saxitoxin and tetrodotoxin-binding protein 2 (391 aa).

The signal sequence occupies residues 1-20 (MGAVPGVVLLLMLAVLGIRA). Repeat copies occupy residues 24–202 (PEEC…HKKS) and 203–391 (PEEC…PEQD). Asn-41, Asn-54, Asn-63, Asn-97, Asn-234, Asn-268, Asn-277, and Asn-307 each carry an N-linked (GlcNAc...) asparagine glycan.

Homodimer or heterodimer of PSTBP1 and PSTBP2. In terms of processing, glycosylated.

The protein localises to the secreted. Its function is as follows. Binds both saxitoxin and tetradotoxin. May play a role in toxin accumulation and/or excretion. This Takifugu pardalis (Panther puffer) protein is Saxitoxin and tetrodotoxin-binding protein 2 (psbp2).